The primary structure comprises 133 residues: Large ribosomal subunit protein bL20 (133 aa).

The protein belongs to the bacterial ribosomal protein bL20 family.

Its function is as follows. Binds directly to 23S ribosomal RNA and is necessary for the in vitro assembly process of the 50S ribosomal subunit. It is not involved in the protein synthesizing functions of that subunit. The sequence is that of Large ribosomal subunit protein bL20 from Chelativorans sp. (strain BNC1).